Here is a 138-residue protein sequence, read N- to C-terminus: Small ribosomal subunit protein uS12 (138 aa).

D89 is modified (3-methylthioaspartic acid). The disordered stretch occupies residues 107-138; sequence VSGRMQRRSKYGAKFPKTGTGKTKAVPTKNKK.

It belongs to the universal ribosomal protein uS12 family. In terms of assembly, part of the 30S ribosomal subunit. Contacts proteins S8 and S17. May interact with IF1 in the 30S initiation complex.

Its function is as follows. With S4 and S5 plays an important role in translational accuracy. In terms of biological role, interacts with and stabilizes bases of the 16S rRNA that are involved in tRNA selection in the A site and with the mRNA backbone. Located at the interface of the 30S and 50S subunits, it traverses the body of the 30S subunit contacting proteins on the other side and probably holding the rRNA structure together. The combined cluster of proteins S8, S12 and S17 appears to hold together the shoulder and platform of the 30S subunit. This chain is Small ribosomal subunit protein uS12, found in Azobacteroides pseudotrichonymphae genomovar. CFP2.